The primary structure comprises 515 residues: Bifunctional purine biosynthesis protein PurH (515 aa).

One can recognise an MGS-like domain in the interval 1–145; the sequence is MTKRALISVS…KNHASVTVVV (145 aa).

The protein belongs to the PurH family.

It carries out the reaction (6R)-10-formyltetrahydrofolate + 5-amino-1-(5-phospho-beta-D-ribosyl)imidazole-4-carboxamide = 5-formamido-1-(5-phospho-D-ribosyl)imidazole-4-carboxamide + (6S)-5,6,7,8-tetrahydrofolate. The catalysed reaction is IMP + H2O = 5-formamido-1-(5-phospho-D-ribosyl)imidazole-4-carboxamide. It functions in the pathway purine metabolism; IMP biosynthesis via de novo pathway; 5-formamido-1-(5-phospho-D-ribosyl)imidazole-4-carboxamide from 5-amino-1-(5-phospho-D-ribosyl)imidazole-4-carboxamide (10-formyl THF route): step 1/1. Its pathway is purine metabolism; IMP biosynthesis via de novo pathway; IMP from 5-formamido-1-(5-phospho-D-ribosyl)imidazole-4-carboxamide: step 1/1. In Streptococcus gordonii (strain Challis / ATCC 35105 / BCRC 15272 / CH1 / DL1 / V288), this protein is Bifunctional purine biosynthesis protein PurH.